The primary structure comprises 151 residues: UPF0178 protein YaiI (151 aa).

Belongs to the UPF0178 family.

The protein is UPF0178 protein YaiI of Salmonella paratyphi C (strain RKS4594).